Consider the following 253-residue polypeptide: Ubiquinone/menaquinone biosynthesis C-methyltransferase UbiE (253 aa).

S-adenosyl-L-methionine is bound by residues Thr76, Asp97, and 125–126 (NA).

It belongs to the class I-like SAM-binding methyltransferase superfamily. MenG/UbiE family.

The catalysed reaction is a 2-demethylmenaquinol + S-adenosyl-L-methionine = a menaquinol + S-adenosyl-L-homocysteine + H(+). It carries out the reaction a 2-methoxy-6-(all-trans-polyprenyl)benzene-1,4-diol + S-adenosyl-L-methionine = a 5-methoxy-2-methyl-3-(all-trans-polyprenyl)benzene-1,4-diol + S-adenosyl-L-homocysteine + H(+). The protein operates within quinol/quinone metabolism; menaquinone biosynthesis; menaquinol from 1,4-dihydroxy-2-naphthoate: step 2/2. It functions in the pathway cofactor biosynthesis; ubiquinone biosynthesis. Functionally, methyltransferase required for the conversion of demethylmenaquinol (DMKH2) to menaquinol (MKH2) and the conversion of 2-polyprenyl-6-methoxy-1,4-benzoquinol (DDMQH2) to 2-polyprenyl-3-methyl-6-methoxy-1,4-benzoquinol (DMQH2). In Rhodopseudomonas palustris (strain BisB5), this protein is Ubiquinone/menaquinone biosynthesis C-methyltransferase UbiE.